A 457-amino-acid polypeptide reads, in one-letter code: MILPTIAIIGRPNVGKSTLVNRLCQSNDAIVFDKPGVTRDRTYQNASWGGKEFQIVDTGGLVFDDESEFLPEIRTQVFLALEEASLALLVVDGNQGVTDGDLSIAKWLRNSSCKTIVAVNKCESTTLGISLASEFWKLGLGEPNPVSAIHGSGTGDLLDLVIGELPENNIQDDEEKIMMSIIGRPNVGKSSLLNSICGEKRAIVSDISGTTTDSIDTLIKKGDNNWKIIDTAGIRRKKNVKYGTEFFGINRAFKSIDRSDVCVLVIDAVDGVTDQDQKLAGRIEEQGRACIIVVNKWDLIEKNSSTIYQVEKELRSKLYFLHWSKMIFISALTGQRVDNIFEHALNAVNQHRRRVTTSVVNEVLKESISWKSPPTKRSGKQGRLYYGTQVKNKPPTFTLFVNDPKLFGITYRRYIEKQIRVNLGFEGTPLILLWRGKQQRALNKEVERENIELIQKD.

2 consecutive EngA-type G domains span residues 4–169 (PTIA…PENN) and 177–352 (IMMS…NQHR). Residues 10–17 (GRPNVGKS), 57–61 (DTGGL), 120–123 (NKCE), 183–190 (GRPNVGKS), 230–234 (DTAGI), and 295–298 (NKWD) each bind GTP. Positions 353-438 (RRVTTSVVNE…PLILLWRGKQ (86 aa)) constitute a KH-like domain.

The protein belongs to the TRAFAC class TrmE-Era-EngA-EngB-Septin-like GTPase superfamily. EngA (Der) GTPase family. As to quaternary structure, associates with the 50S ribosomal subunit.

Its function is as follows. GTPase that plays an essential role in the late steps of ribosome biogenesis. This is GTPase Der from Prochlorococcus marinus (strain AS9601).